Reading from the N-terminus, the 534-residue chain is MSVKYIFVTGGVVSGLGKGITAASLGRLLKARGVHVTIQKFDPYINVDPGTMSPYQHGEVFVTEDGAETDLDLGHYERFIDENLSKNSNITTGKIYWSVISKERKGDYLGGTVQVIPHITNEIKDRIYRVGKSERTDVVITEIGGTVGDIESLPFLESIRQVSNEVGRENVMYIHVTLVPYLGISGELKTKPTQHSVKELRSIGIQPDVIVCRTEKYLSQDMKEKLSLFCNVPEGAVVQNLDAEVLYEVPLMLEKEGLAKIVCKRLGLECKEPDLDEWEEMVRRQKNPKSSVTIGLVGKYVELHDAYLSVAESLRHGGIGNDVEVDIRWVNSEEIENGEVNSFLQGVDGILVPGGFGDRGIEGKINAITFARENKIPFFGICLGMQMAVVEFARNVAGLHDANSSEFGETPYPVIDLMPEQREVDEMGGTMRLGVYPCKINENTLIKGIFEDELIYERHRHRYEFNNEFRDTFIKNGMTLSGLSPSGKLVETIELKDHPWFVGVQFHPEFKSRPNKPHPLFKDFVRAAYEYKTK.

The tract at residues 1 to 268 is amidoligase domain; the sequence is MSVKYIFVTG…AKIVCKRLGL (268 aa). Residue S14 coordinates CTP. S14 provides a ligand contact to UTP. 15 to 20 lines the ATP pocket; it reads GLGKGI. Y55 contacts L-glutamine. D72 lines the ATP pocket. 2 residues coordinate Mg(2+): D72 and E142. Residues 149-151, 189-194, and K225 contribute to the CTP site; these read DIE and KTKPTQ. Residues 189–194 and K225 each bind UTP; that span reads KTKPTQ. The Glutamine amidotransferase type-1 domain maps to 293–534; it reads TIGLVGKYVE…VRAAYEYKTK (242 aa). Position 355 (G355) interacts with L-glutamine. The Nucleophile; for glutamine hydrolysis role is filled by C382. Residues 383–386, E406, and R462 contribute to the L-glutamine site; that span reads LGMQ. Catalysis depends on residues H507 and E509.

This sequence belongs to the CTP synthase family. As to quaternary structure, homotetramer.

The enzyme catalyses UTP + L-glutamine + ATP + H2O = CTP + L-glutamate + ADP + phosphate + 2 H(+). The catalysed reaction is L-glutamine + H2O = L-glutamate + NH4(+). It carries out the reaction UTP + NH4(+) + ATP = CTP + ADP + phosphate + 2 H(+). The protein operates within pyrimidine metabolism; CTP biosynthesis via de novo pathway; CTP from UDP: step 2/2. Its activity is regulated as follows. Allosterically activated by GTP, when glutamine is the substrate; GTP has no effect on the reaction when ammonia is the substrate. The allosteric effector GTP functions by stabilizing the protein conformation that binds the tetrahedral intermediate(s) formed during glutamine hydrolysis. Inhibited by the product CTP, via allosteric rather than competitive inhibition. Functionally, catalyzes the ATP-dependent amination of UTP to CTP with either L-glutamine or ammonia as the source of nitrogen. Regulates intracellular CTP levels through interactions with the four ribonucleotide triphosphates. The chain is CTP synthase from Ruminiclostridium cellulolyticum (strain ATCC 35319 / DSM 5812 / JCM 6584 / H10) (Clostridium cellulolyticum).